Here is a 386-residue protein sequence, read N- to C-terminus: Bifunctional enzyme IspD/IspF (386 aa).

The tract at residues 1-230 (MNSVPSLPGQ…LEEQSMSVIP (230 aa)) is 2-C-methyl-D-erythritol 4-phosphate cytidylyltransferase. Positions 231-386 (RTGMGFDVHR…AQAVATVVSG (156 aa)) are 2-C-methyl-D-erythritol 2,4-cyclodiphosphate synthase. A divalent metal cation is bound by residues aspartate 237 and histidine 239. Residues 237–239 (DVH) and 263–264 (HS) contribute to the 4-CDP-2-C-methyl-D-erythritol 2-phosphate site. Histidine 271 lines the a divalent metal cation pocket. Residues 285 to 287 (DIG), 361 to 364 (TTTE), and arginine 371 each bind 4-CDP-2-C-methyl-D-erythritol 2-phosphate.

It in the N-terminal section; belongs to the IspD/TarI cytidylyltransferase family. IspD subfamily. In the C-terminal section; belongs to the IspF family. A divalent metal cation is required as a cofactor.

It carries out the reaction 2-C-methyl-D-erythritol 4-phosphate + CTP + H(+) = 4-CDP-2-C-methyl-D-erythritol + diphosphate. The catalysed reaction is 4-CDP-2-C-methyl-D-erythritol 2-phosphate = 2-C-methyl-D-erythritol 2,4-cyclic diphosphate + CMP. It functions in the pathway isoprenoid biosynthesis; isopentenyl diphosphate biosynthesis via DXP pathway; isopentenyl diphosphate from 1-deoxy-D-xylulose 5-phosphate: step 2/6. Its pathway is isoprenoid biosynthesis; isopentenyl diphosphate biosynthesis via DXP pathway; isopentenyl diphosphate from 1-deoxy-D-xylulose 5-phosphate: step 4/6. In terms of biological role, bifunctional enzyme that catalyzes the formation of 4-diphosphocytidyl-2-C-methyl-D-erythritol from CTP and 2-C-methyl-D-erythritol 4-phosphate (MEP) (IspD), and catalyzes the conversion of 4-diphosphocytidyl-2-C-methyl-D-erythritol 2-phosphate (CDP-ME2P) to 2-C-methyl-D-erythritol 2,4-cyclodiphosphate (ME-CPP) with a corresponding release of cytidine 5-monophosphate (CMP) (IspF). The protein is Bifunctional enzyme IspD/IspF of Novosphingobium aromaticivorans (strain ATCC 700278 / DSM 12444 / CCUG 56034 / CIP 105152 / NBRC 16084 / F199).